A 1580-amino-acid chain; its full sequence is Endoribonuclease Dicer homolog 3 (1580 aa).

Residues 1 to 12 (MHSSLEPEKMEE) are compositionally biased toward basic and acidic residues. A disordered region spans residues 1-22 (MHSSLEPEKMEEGGGSNSLKRK). The region spanning 51-223 (VYEVAKNRNI…SPSNYAAQVS (173 aa)) is the Helicase ATP-binding domain. Position 64–71 (64–71 (LGTGIDKS)) interacts with ATP. Residues 170-173 (DECH) carry the DECH box motif. Positions 394 to 562 (KLKELFHLLD…SCPPPVKNGH (169 aa)) constitute a Helicase C-terminal domain. Over residues 581–597 (EEAASTQTMSDPPSRNE) the composition is skewed to polar residues. Disordered regions lie at residues 581 to 601 (EEAA…QLPP) and 613 to 638 (QSNG…KKRK). Residues 622–633 (SSKSKSSSSAAG) are compositionally biased toward low complexity. The region spanning 836–960 (NLIHFANASS…LPPELLARID (125 aa)) is the PAZ domain. 2 RNase III domains span residues 985 to 1157 (ASQL…VSGG) and 1198 to 1340 (LIEL…IDTR). The Mg(2+) site is built by E1234, D1326, and E1329.

Belongs to the helicase family. Dicer subfamily. In terms of assembly, interacts with DRB2 and DRB5. Mg(2+) serves as cofactor. Mn(2+) is required as a cofactor.

It localises to the nucleus. Its subcellular location is the nucleolus. Functionally, ribonuclease (RNase) III involved in RNA-mediated post-transcriptional gene silencing (PTGS). Involved in the processing of repeat-associated small interfering RNAs (ra-siRNAs, derived from heterochromatin and DNA repeats such as transposons) by cleaving small dsRNAs into 24 nucleotide ra-siRNAs. Plays a role in antiviral RNA silencing. Involved in the production of viral siRNAs derived from the cabbage leaf curl virus (CaLCuV) and tobacco rattle virus (TRV). Targeted by the viral silencing suppressor (VSR) protein 2b of the cucumber mosaic virus (CMV) that inactivates DCL3 function in RNA silencing. Acts redundantly with DICER-LIKE 1 (DCL1) to promote flowering via repression of FLOWERING LOCUS C (FLC). Does not seem to be involved in microRNAs (miRNAs) processing. The protein is Endoribonuclease Dicer homolog 3 (DCL3) of Arabidopsis thaliana (Mouse-ear cress).